We begin with the raw amino-acid sequence, 90 residues long: Small ribosomal subunit protein uS17 (90 aa).

This sequence belongs to the universal ribosomal protein uS17 family. As to quaternary structure, part of the 30S ribosomal subunit.

Its function is as follows. One of the primary rRNA binding proteins, it binds specifically to the 5'-end of 16S ribosomal RNA. This chain is Small ribosomal subunit protein uS17, found in Methylobacillus flagellatus (strain ATCC 51484 / DSM 6875 / VKM B-1610 / KT).